Here is a 557-residue protein sequence, read N- to C-terminus: T-complex protein 1 subunit eta (557 aa).

Residue alanine 2 is modified to N-acetylalanine. The disordered stretch occupies residues 529–557 (PKSESAQGDAAGAMGRGRGGGRGRGMRRR). Positions 547-557 (GGGRGRGMRRR) are enriched in basic residues.

Belongs to the TCP-1 chaperonin family. Heterooligomeric complex of about 850 to 900 kDa that forms two stacked rings, 12 to 16 nm in diameter. Interacts with KNAT1.

Its subcellular location is the cytoplasm. Molecular chaperone; assists the folding of proteins upon ATP hydrolysis. Known to play a role, in vitro, in the folding of actin and tubulin. This is T-complex protein 1 subunit eta from Arabidopsis thaliana (Mouse-ear cress).